The primary structure comprises 91 residues: DNA-directed RNA polymerase subunit omega (91 aa).

Belongs to the RNA polymerase subunit omega family. As to quaternary structure, the RNAP catalytic core consists of 2 alpha, 1 beta, 1 beta' and 1 omega subunit. When a sigma factor is associated with the core the holoenzyme is formed, which can initiate transcription.

It catalyses the reaction RNA(n) + a ribonucleoside 5'-triphosphate = RNA(n+1) + diphosphate. Promotes RNA polymerase assembly. Latches the N- and C-terminal regions of the beta' subunit thereby facilitating its interaction with the beta and alpha subunits. The protein is DNA-directed RNA polymerase subunit omega of Shigella flexneri.